Consider the following 497-residue polypeptide: Taxane 10-beta-hydroxylase (497 aa).

Cys443 is a heme binding site.

Belongs to the cytochrome P450 family. Heme serves as cofactor.

It carries out the reaction taxa-4(20),11-dien-5alpha-yl acetate + reduced [NADPH--hemoprotein reductase] + O2 = 10beta-hydroxytaxa-4(20),11-dien-5alpha-yl acetate + oxidized [NADPH--hemoprotein reductase] + H2O + H(+). Its pathway is alkaloid biosynthesis; taxol biosynthesis; 10-deacetyl-2-debenzoylbaccatin III from taxa-4(20),11-dien-5alpha-ol: step 2/3. Its function is as follows. Involved in the transformation of a taxadienyl acetate by hydroxylation at C10 to yield taxadien-5-alpha-acetoxy-10-beta-ol. The sequence is that of Taxane 10-beta-hydroxylase (CYP725A1) from Taxus cuspidata (Japanese yew).